A 647-amino-acid chain; its full sequence is LIM domain kinase 1 (647 aa).

LIM zinc-binding domains follow at residues 25 to 75 (CASC…CKKD) and 84 to 137 (CHGC…CGQC). The PDZ domain occupies 165-258 (LVSIPASAHG…LLQLTLEHDP (94 aa)). A Phosphoserine modification is found at S210. T229 carries the post-translational modification Phosphothreonine. Residues 256–319 (HDPHDSLGHG…SPASQRKDLG (64 aa)) form a disordered region. Low complexity predominate over residues 266 to 277 (PVSDPSPLSSPV). Composition is skewed to polar residues over residues 278–289 (HTPSGQAASSAR) and 298–313 (SIDT…SPAS). A phosphoserine mark is found at S298, S302, S307, and S310. S323 carries the phosphoserine; by MAPKAPK2 modification. At S337 the chain carries Phosphoserine. The region spanning 339–604 (LIHGEVLGKG…PSFVKLEQWL (266 aa)) is the Protein kinase domain. Residues 345-353 (LGKGCFGQA) and K368 each bind ATP. Residue D460 is part of the active site. T508 carries the phosphothreonine; by ROCK1 modification.

Belongs to the protein kinase superfamily. TKL Ser/Thr protein kinase family. As to quaternary structure, self-associates to form homodimers. Interacts with HSP90AA1; this interaction promotes LIMK1 dimerization and subsequent transphosphorylation. Interacts with CDKN1C. Interacts (via LIM domain) with the cytoplasmic domain of NRG1. Interacts with NISCH. Interacts with SSH1. Interacts with RLIM and RNF6. Interacts (via LIM zinc-binding domains) with FAM89B/LRAP25 (via LRR repeat). Forms a tripartite complex with CDC42BPA, CDC42BPB and FAM89B/LRAP25. Post-translationally, autophosphorylated. Phosphorylated on Thr-508 by ROCK1 and PAK1, resulting in activation. Phosphorylated by PAK4 which increases the ability of LIMK1 to phosphorylate cofilin. Phosphorylated at Ser-323 by MAPKAPK2 during activation of VEGFA-induced signaling, which results in activation of LIMK1 and promotion of actin reorganization, cell migration, and tubule formation of endothelial cells. Dephosphorylated and inactivated by SSH1. Phosphorylated by CDC42BP. Ubiquitinated. 'Lys-48'-linked polyubiquitination by RNF6 leads to proteasomal degradation through the 26S proteasome, modulating LIMK1 levels in the growth cone and its effect on axonal outgrowth. Also polyubiquitinated by RLIM. As to expression, highest expression in the nervous system, particularly in the spinal cord and the cranial nerve and dorsal root ganglia.

It localises to the cytoplasm. Its subcellular location is the nucleus. The protein localises to the cytoskeleton. It is found in the cell projection. The protein resides in the lamellipodium. It carries out the reaction L-seryl-[protein] + ATP = O-phospho-L-seryl-[protein] + ADP + H(+). The enzyme catalyses L-threonyl-[protein] + ATP = O-phospho-L-threonyl-[protein] + ADP + H(+). Its function is as follows. Serine/threonine-protein kinase that plays an essential role in the regulation of actin filament dynamics. Acts downstream of several Rho family GTPase signal transduction pathways. Activated by upstream kinases including ROCK1, PAK1 and PAK4, which phosphorylate LIMK1 on a threonine residue located in its activation loop. LIMK1 subsequently phosphorylates and inactivates the actin binding/depolymerizing factors cofilin-1/CFL1, cofilin-2/CFL2 and destrin/DSTN, thereby preventing the cleavage of filamentous actin (F-actin), and stabilizing the actin cytoskeleton. In this way LIMK1 regulates several actin-dependent biological processes including cell motility, cell cycle progression, and differentiation. Phosphorylates TPPP on serine residues, thereby promoting microtubule disassembly. Stimulates axonal outgrowth and may be involved in brain development. The chain is LIM domain kinase 1 (Limk1) from Mus musculus (Mouse).